We begin with the raw amino-acid sequence, 125 residues long: uncharacterized protein (125 aa).

This is an uncharacterized protein from Microplitis demolitor (Parasitoid wasp).